A 529-amino-acid polypeptide reads, in one-letter code: Cytokinin dehydrogenase 4 (529 aa).

A signal peptide spans 1-27; that stretch reads MRGAMKPSIVHCLKLLMLLALGGVTMH. The FAD-binding PCMH-type domain maps to 63–244; it reads CSLLPAAVLH…TRARIALEPA (182 aa). Residues A99, G101, and G103 each coordinate FAD. A Pros-8alpha-FAD histidine modification is found at H104. FAD contacts are provided by S105, Q109, D168, T173, S179, V183, and I234. N-linked (GlcNAc...) asparagine glycans are attached at residues N285, N419, and N425. Residues Y479 and Q517 each contribute to the FAD site.

Belongs to the oxygen-dependent FAD-linked oxidoreductase family. Monomer. The cofactor is FAD. In terms of tissue distribution, expressed in inflorescence meristems.

The protein resides in the secreted. It is found in the extracellular space. The catalysed reaction is N(6)-dimethylallyladenine + A + H2O = 3-methyl-2-butenal + adenine + AH2. Catalyzes the oxidation of cytokinins, a family of N(6)-substituted adenine derivatives that are plant hormones, where the substituent is an isopentenyl group. The protein is Cytokinin dehydrogenase 4 (CKX4) of Oryza sativa subsp. japonica (Rice).